Consider the following 339-residue polypeptide: Sphingomyelinase D (339 aa).

Residues 1-21 form the signal peptide; sequence MVSLLRLCSFLLAAGSILVQG. Residue H60 is part of the active site. Residues E80, D82, and D128 each contribute to the Mg(2+) site. Residues 309–316 carry the SMD-tail motif; sequence ATVDDNPW. Residues 313 to 339 form a disordered region; it reads DNPWSSMSKKGSSKSSWVKGEVPSIAH. Positions 317-328 are enriched in low complexity; the sequence is SSMSKKGSSKSS.

Belongs to the sphingomyelinase D/phospholipase D family. Mg(2+) serves as cofactor.

Its subcellular location is the secreted. It catalyses the reaction a sphingomyelin + H2O = an N-acylsphing-4-enine 1-phosphate + choline + H(+). Functionally, catalyzes the hydrolysis of sphingomyelin. Sphingomyelinases D are produced by some spider in their venoms, but also by arthropods such as ticks, or pathogenic bacteria and fungi. They might play a role in pathogenicity through different mechanisms, such as membrane destabilization and host cell penetration, but also pulmonary inflammation and cutaneous lesions. This chain is Sphingomyelinase D, found in Arthroderma benhamiae (strain ATCC MYA-4681 / CBS 112371) (Trichophyton mentagrophytes).